The following is a 215-amino-acid chain: Probable nicotinate-nucleotide adenylyltransferase (215 aa).

The protein belongs to the NadD family.

The catalysed reaction is nicotinate beta-D-ribonucleotide + ATP + H(+) = deamido-NAD(+) + diphosphate. Its pathway is cofactor biosynthesis; NAD(+) biosynthesis; deamido-NAD(+) from nicotinate D-ribonucleotide: step 1/1. Functionally, catalyzes the reversible adenylation of nicotinate mononucleotide (NaMN) to nicotinic acid adenine dinucleotide (NaAD). The polypeptide is Probable nicotinate-nucleotide adenylyltransferase (Shewanella putrefaciens (strain CN-32 / ATCC BAA-453)).